Here is a 388-residue protein sequence, read N- to C-terminus: Pepsin A-2/A-3 (388 aa).

A signal peptide spans Met1 to Cys15. 2 consecutive propeptides (activation peptide) follow at residues Ile16–Asp40 and Phe41–Leu62. Residues Tyr76 to Ala385 enclose the Peptidase A1 domain. Asp94 is a catalytic residue. Residues Cys107 and Cys112 are joined by a disulfide bond. Ser130 bears the Phosphoserine mark. The cysteines at positions 268 and 272 are disulfide-linked. The active site involves Asp277. Cys311 and Cys344 are oxidised to a cystine.

Belongs to the peptidase A1 family. Pepsin A-2 is phosphorylated, but not pepsin A-3. In terms of processing, each pepsinogen is converted to corresponding pepsin at pH 2.0 in part as a result of the release of a 47 AA activation segment and in part as a result of stepwise proteolytic cleavage via an intermediate form(s).

The protein resides in the secreted. It carries out the reaction Preferential cleavage: hydrophobic, preferably aromatic, residues in P1 and P1' positions. Cleaves 1-Phe-|-Val-2, 4-Gln-|-His-5, 13-Glu-|-Ala-14, 14-Ala-|-Leu-15, 15-Leu-|-Tyr-16, 16-Tyr-|-Leu-17, 23-Gly-|-Phe-24, 24-Phe-|-Phe-25 and 25-Phe-|-Tyr-26 bonds in the B chain of insulin.. Shows particularly broad specificity; although bonds involving phenylalanine and leucine are preferred, many others are also cleaved to some extent. The sequence is that of Pepsin A-2/A-3 from Macaca fuscata fuscata (Japanese macaque).